We begin with the raw amino-acid sequence, 365 residues long: MDIIETAKLEGHLESQTNNSTNTYTSPTEAVEEEDKNGKGKPKTLSNGLRKGAKKYPDYIQISMPNDSRNKLPLEWWKTGIAFVYALFNLILTTVMITVVHERVPPKELSPPLPDKFFDYVDRVKWAFSVSEINGMVLVGLWLTQWLFLRYKSIVGRRFFFIMGTLYLYRCITMYVTTLPVPGMHFQCAPKLNGDSQAKIQRILRLLSGGGLSITGSHILCGDFLFSGHTVVLTLTYLFIKEYSPRHFWWYHLVCWLLSAAGIICILVAHEHYTVDVIIAYYITTRLFWWYHSMANEKNLKVSSQTNFLSRAWWFPIFYFFEKNVQGSIPCCFSWPLSWPPGCFKSSCKKYSRVQKIGEDNEKST.

The disordered stretch occupies residues 9 to 50 (LEGHLESQTNNSTNTYTSPTEAVEEEDKNGKGKPKTLSNGLR). Residues 15-28 (SQTNNSTNTYTSPT) show a composition bias toward low complexity. Helical transmembrane passes span 80–100 (GIAF…ITVV), 128–148 (FSVS…QWLF), 159–179 (FFFI…VTTL), 219–239 (ILCG…TYLF), and 248–268 (FWWY…CILV). Residue H229 is part of the active site. Residues H272 and D276 contribute to the active site. Residues 273–290 (YTVDVIIAYYITTRLFWW) traverse the membrane as a helical segment. Residues 291–365 (YHSMANEKNL…KIGEDNEKST (75 aa)) lie on the Cytoplasmic side of the membrane. Residues C331, C332, C343, and C348 are each lipidated (S-palmitoyl cysteine).

It belongs to the sphingomyelin synthase family. In terms of processing, palmitoylated on Cys-331, Cys-332, Cys-343 and Cys-348; which plays an important role in plasma membrane localization. Expression restricted to late round spermatids and elongating spermatids but not detected in late elongate spermatids and Sertoli cells (at protein level).

The protein resides in the cell membrane. The protein localises to the golgi apparatus membrane. It carries out the reaction an N-acylsphing-4-enine + a 1,2-diacyl-sn-glycero-3-phosphocholine = a sphingomyelin + a 1,2-diacyl-sn-glycerol. It catalyses the reaction an N-acylsphinganine + a 1,2-diacyl-sn-glycero-3-phosphocholine = an N-acylsphinganine-1-phosphocholine + a 1,2-diacyl-sn-glycerol. The catalysed reaction is an N-acyl-(4R)-4-hydroxysphinganine + a 1,2-diacyl-sn-glycero-3-phosphocholine = an N-acyl-(4R)-4-hydroxysphinganine-phosphocholine + a 1,2-diacyl-sn-glycerol. The enzyme catalyses an N-acylsphing-4-enine + a 1,2-diacyl-sn-glycero-3-phosphoethanolamine = an N-acylsphing-4-enine 1-phosphoethanolamine + a 1,2-diacyl-sn-glycerol. It carries out the reaction an N-acylsphinganine + a 1,2-diacyl-sn-glycero-3-phosphoethanolamine = an N-acylsphinganine-1-phosphoethanolamine + a 1,2-diacyl-sn-glycerol. It catalyses the reaction an N-acyl-(4R)-4-hydroxysphinganine + a 1,2-diacyl-sn-glycero-3-phosphoethanolamine = an N-acyl-(4R)-4-hydroxysphinganine-1-phosphoethanolamine + a 1,2-diacyl-sn-glycerol. The catalysed reaction is 1,2-dihexadecanoyl-sn-glycero-3-phosphocholine + an N-acylsphing-4-enine = 1,2-dihexadecanoyl-sn-glycerol + a sphingomyelin. The enzyme catalyses 1-(9Z-octadecenoyl)-2-acyl-sn-3-glycerol + a sphingomyelin = a 1-(9Z-octadecenoyl)-2-acyl-sn-glycero-3-phosphocholine + an N-acylsphing-4-enine. It carries out the reaction N-hexadecanoylsphinganine + a 1,2-diacyl-sn-glycero-3-phosphocholine = N-hexadecanoyl-sphinganine-1-phosphocholine + a 1,2-diacyl-sn-glycerol. It catalyses the reaction N-hexadecanoyl-(4R)-hydroxysphinganine + a 1,2-diacyl-sn-glycero-3-phosphocholine = N-hexadecanoyl-(4R)-hydroxysphinganine-phosphocholine + a 1,2-diacyl-sn-glycerol. The catalysed reaction is N-hexadecanoylsphinganine + a 1,2-diacyl-sn-glycero-3-phosphoethanolamine = N-hexadecanoyl-sphinganine-1-phosphoethanolamine + a 1,2-diacyl-sn-glycerol. The enzyme catalyses N-hexadecanoyl-(4R)-hydroxysphinganine + a 1,2-diacyl-sn-glycero-3-phosphoethanolamine = N-hexadecanoyl-(4R)-hydroxysphinganine-1-phosphoethanolamine + a 1,2-diacyl-sn-glycerol. It participates in sphingolipid metabolism. Its function is as follows. Sphingomyelin synthase that primarily contributes to sphingomyelin synthesis and homeostasis at the plasma membrane. Catalyzes the reversible transfer of phosphocholine moiety in sphingomyelin biosynthesis: in the forward reaction transfers phosphocholine head group of phosphatidylcholine (PC) on to ceramide (CER) to form ceramide phosphocholine (sphingomyelin, SM) and diacylglycerol (DAG) as by-product, and in the reverse reaction transfers phosphocholine from SM to DAG to form PC and CER. The direction of the reaction appears to depend on the levels of CER and DAG in the plasma membrane. Does not use free phosphorylcholine or CDP-choline as donors. Can also transfer phosphoethanolamine head group of phosphatidylethanolamine (PE) on to ceramide (CER) to form ceramide phosphoethanolamine (CPE). Regulates receptor-mediated signal transduction via mitogenic DAG and proapoptotic CER, as well as via SM, a structural component of membrane rafts that serve as platforms for signal transduction and protein sorting. To a lesser extent, plays a role in secretory transport via regulation of DAG pool at the Golgi apparatus and its downstream effects on PRKD1. Required for normal bone matrix mineralization. In Rattus norvegicus (Rat), this protein is Phosphatidylcholine:ceramide cholinephosphotransferase 2 (Sgms2).